Consider the following 202-residue polypeptide: Ras-related protein Rab-18 (202 aa).

Ser20, Gly23, Lys24, Ser25, Ser26, Asp37, Pro38, Thr43, Gly69, Lys126, Asp128, and Ala155 together coordinate GTP. The Effector region motif lies at 40–48 (QAATIGVDF). Residues 183 to 202 (RPTFRLGQPTDTSSGNLCGC) form a disordered region. Residues 191–202 (PTDTSSGNLCGC) are compositionally biased toward polar residues. S-geranylgeranyl cysteine attachment occurs at residues Cys200 and Cys202. Cys202 is subject to Cysteine methyl ester.

Belongs to the small GTPase superfamily. Rab family.

The enzyme catalyses GTP + H2O = GDP + phosphate + H(+). Its function is as follows. The small GTPases Rab are key regulators of intracellular membrane trafficking, from the formation of transport vesicles to their fusion with membranes. Rabs cycle between an inactive GDP-bound form and an active GTP-bound form that is able to recruit to membranes different sets of downstream effectors directly responsible for vesicle formation, movement, tethering and fusion. Plays a role in apical endocytosis/recycling. May be implicated in transport between the plasma membrane and early endosomes. The protein is Ras-related protein Rab-18 (rab-18) of Caenorhabditis briggsae.